Reading from the N-terminus, the 559-residue chain is Dihydroxy-acid dehydratase (559 aa).

D80 contributes to the Mg(2+) binding site. C121 contributes to the [2Fe-2S] cluster binding site. The Mg(2+) site is built by D122 and K123. K123 carries the post-translational modification N6-carboxylysine. Position 194 (C194) interacts with [2Fe-2S] cluster. E447 serves as a coordination point for Mg(2+). The active-site Proton acceptor is S473.

It belongs to the IlvD/Edd family. Homodimer. The cofactor is [2Fe-2S] cluster. It depends on Mg(2+) as a cofactor.

It carries out the reaction (2R)-2,3-dihydroxy-3-methylbutanoate = 3-methyl-2-oxobutanoate + H2O. It catalyses the reaction (2R,3R)-2,3-dihydroxy-3-methylpentanoate = (S)-3-methyl-2-oxopentanoate + H2O. It functions in the pathway amino-acid biosynthesis; L-isoleucine biosynthesis; L-isoleucine from 2-oxobutanoate: step 3/4. Its pathway is amino-acid biosynthesis; L-valine biosynthesis; L-valine from pyruvate: step 3/4. Its function is as follows. Functions in the biosynthesis of branched-chain amino acids. Catalyzes the dehydration of (2R,3R)-2,3-dihydroxy-3-methylpentanoate (2,3-dihydroxy-3-methylvalerate) into 2-oxo-3-methylpentanoate (2-oxo-3-methylvalerate) and of (2R)-2,3-dihydroxy-3-methylbutanoate (2,3-dihydroxyisovalerate) into 2-oxo-3-methylbutanoate (2-oxoisovalerate), the penultimate precursor to L-isoleucine and L-valine, respectively. The sequence is that of Dihydroxy-acid dehydratase from Chlorobium chlorochromatii (strain CaD3).